The sequence spans 271 residues: Phosphatidylinositol transfer protein beta isoform (271 aa).

Lys215 bears the N6-acetyllysine mark. The residue at position 262 (Ser262) is a Phosphoserine; by PKC.

The protein belongs to the PtdIns transfer protein family. PI transfer class I subfamily. Post-translationally, constitutive phosphorylation of Ser-262 has no effect on phospholipid transfer activity but is required for Golgi targeting.

It localises to the golgi apparatus. Its subcellular location is the golgi apparatus membrane. The protein resides in the endoplasmic reticulum membrane. It catalyses the reaction a 1,2-diacyl-sn-glycero-3-phosphocholine(in) = a 1,2-diacyl-sn-glycero-3-phosphocholine(out). It carries out the reaction a 1,2-diacyl-sn-glycero-3-phospho-(1D-myo-inositol)(in) = a 1,2-diacyl-sn-glycero-3-phospho-(1D-myo-inositol)(out). The catalysed reaction is an N-(acyl)-sphingosylphosphocholine(in) = an N-(acyl)-sphingosylphosphocholine(out). In terms of biological role, catalyzes the transfer of phosphatidylinositol, phosphatidylcholine and sphingomyelin between membranes. Required for COPI-mediated retrograde transport from the Golgi to the endoplasmic reticulum; phosphatidylinositol and phosphatidylcholine transfer activity is essential for this function. The polypeptide is Phosphatidylinositol transfer protein beta isoform (Pitpnb) (Mus musculus (Mouse)).